A 502-amino-acid chain; its full sequence is MSGFEDGFSAEKLFSQGYSYTYDDVIFLPHFIDFSTDAVSLSTRLSKRVPLSIPCVASPMDTVSESHMAAAMAALGGIGIVHYNCDIDTQASVIRHAKSLQVPIASDAVFKCPEHQIGSVDDFGPSSFVFVSQTGTLTPKLLGYVSKSEWSSMKDDQKEVKIYDYMKSCENKDYYVPWDIDLDKIEAVLEDKQKGFVVLEKEGETVNVVTKDDVERVKGYPKLGSGTVGADKKWMVGAAIGTRESDKERLEHLVKAGANVVVLDSSQGNSIYQLEMIKYVKNTYPELDVVGGNVVTMYQAENLIKAGVDGLRVGMGSGSICTTQEVCAVGRGQATAVYKVSTLAAQHGVPVIADGGISNSGHIVKALVLGASTVMMGSFLAGSTEAPGAYEYRNGRRVKKYRGMGSLEAMTKGSDQRYLGDTAKLKIAQGVVGAVADKGSVLKFIPYTMHAVKQGFQDLGASSLQSAHELLRDNTLRLEARTGAAQIEGGIHGLVSYEKKSF.

Serine 2 carries the N-acetylserine modification. A CBS domain is found at 166-225; it reads MKSCENKDYYVPWDIDLDKIEAVLEDKQKGFVVLEKEGETVNVVTKDDVERVKGYPKLGS. NAD(+) contacts are provided by residues 264–266 and 314–316; these read DSS and GMG. Positions 316 and 318 each coordinate K(+). Serine 319 serves as a coordination point for IMP. K(+) is bound at residue cysteine 321. The Thioimidate intermediate role is filled by cysteine 321. IMP contacts are provided by residues 354-356, 377-378, and 401-405; these read DGG, GS, and YRGMG. Arginine 417 functions as the Proton acceptor in the catalytic mechanism. Glutamine 429 provides a ligand contact to IMP. K(+) is bound by residues glutamate 488, glycine 489, and glycine 490.

The protein belongs to the IMPDH/GMPR family. As to quaternary structure, homotetramer. The cofactor is K(+).

It localises to the cytoplasm. The catalysed reaction is IMP + NAD(+) + H2O = XMP + NADH + H(+). It functions in the pathway purine metabolism; XMP biosynthesis via de novo pathway; XMP from IMP: step 1/1. Its activity is regulated as follows. Mycophenolic acid (MPA) is a non-competitive inhibitor that prevents formation of the closed enzyme conformation by binding to the same site as the amobile flap. In contrast, mizoribine monophosphate (MZP) is a competitive inhibitor that induces the closed conformation. MPA is a potent inhibitor of mammalian IMPDHs but a poor inhibitor of the bacterial enzymes. MZP is a more potent inhibitor of bacterial IMPDH. In terms of biological role, catalyzes the conversion of inosine 5'-phosphate (IMP) to xanthosine 5'-phosphate (XMP), the first committed and rate-limiting step in the de novo synthesis of guanine nucleotides, and therefore plays an important role in the regulation of cell growth. The protein is Inosine-5'-monophosphate dehydrogenase 2 of Arabidopsis thaliana (Mouse-ear cress).